A 463-amino-acid polypeptide reads, in one-letter code: Glycine--tRNA ligase (463 aa).

Substrate-binding residues include arginine 100 and glutamate 175. Residues 207-209 (RNE), 217-222 (FRTREF), 291-292 (EL), and 335-338 (GADR) each bind ATP. Substrate is bound at residue 222 to 226 (FEQME). 331–335 (EPSVG) is a binding site for substrate.

The protein belongs to the class-II aminoacyl-tRNA synthetase family. In terms of assembly, homodimer.

The protein localises to the cytoplasm. The enzyme catalyses tRNA(Gly) + glycine + ATP = glycyl-tRNA(Gly) + AMP + diphosphate. Its function is as follows. Catalyzes the attachment of glycine to tRNA(Gly). The sequence is that of Glycine--tRNA ligase from Clostridium kluyveri (strain NBRC 12016).